Consider the following 155-residue polypeptide: Large-conductance mechanosensitive channel (155 aa).

2 helical membrane-spanning segments follow: residues 25 to 45 (VLDLAVGVIIGGAFGKIVTSL) and 98 to 118 (GDFITQAVNFVIVAFIIFLIV).

Belongs to the MscL family. In terms of assembly, homopentamer.

Its subcellular location is the cell inner membrane. Functionally, channel that opens in response to stretch forces in the membrane lipid bilayer. May participate in the regulation of osmotic pressure changes within the cell. This Novosphingobium aromaticivorans (strain ATCC 700278 / DSM 12444 / CCUG 56034 / CIP 105152 / NBRC 16084 / F199) protein is Large-conductance mechanosensitive channel.